Here is a 1058-residue protein sequence, read N- to C-terminus: Carbamoyl phosphate synthase large chain (1058 aa).

The tract at residues M1 to E401 is carboxyphosphate synthetic domain. ATP contacts are provided by R129, R169, G175, G176, R208, I210, E215, G241, I242, H243, Q284, and E298. Residues K133–V327 form the ATP-grasp 1 domain. Mg(2+) contacts are provided by Q284, E298, and N300. Mn(2+)-binding residues include Q284, E298, and N300. An oligomerization domain region spans residues I402–S546. A carbamoyl phosphate synthetic domain region spans residues V547 to N929. The ATP-grasp 2 domain maps to E671–L861. The ATP site is built by R707, S746, I748, E752, G777, V778, H779, S780, Q820, and E832. Mg(2+) is bound by residues Q820, E832, and N834. Q820, E832, and N834 together coordinate Mn(2+). An MGS-like domain is found at S930 to I1058. Residues S930–I1058 form an allosteric domain region.

Belongs to the CarB family. In terms of assembly, composed of two chains; the small (or glutamine) chain promotes the hydrolysis of glutamine to ammonia, which is used by the large (or ammonia) chain to synthesize carbamoyl phosphate. Tetramer of heterodimers (alpha,beta)4. Mg(2+) serves as cofactor. Mn(2+) is required as a cofactor.

The enzyme catalyses hydrogencarbonate + L-glutamine + 2 ATP + H2O = carbamoyl phosphate + L-glutamate + 2 ADP + phosphate + 2 H(+). It carries out the reaction hydrogencarbonate + NH4(+) + 2 ATP = carbamoyl phosphate + 2 ADP + phosphate + 2 H(+). It functions in the pathway amino-acid biosynthesis; L-arginine biosynthesis; carbamoyl phosphate from bicarbonate: step 1/1. Its pathway is pyrimidine metabolism; UMP biosynthesis via de novo pathway; (S)-dihydroorotate from bicarbonate: step 1/3. Its function is as follows. Large subunit of the glutamine-dependent carbamoyl phosphate synthetase (CPSase). CPSase catalyzes the formation of carbamoyl phosphate from the ammonia moiety of glutamine, carbonate, and phosphate donated by ATP, constituting the first step of 2 biosynthetic pathways, one leading to arginine and/or urea and the other to pyrimidine nucleotides. The large subunit (synthetase) binds the substrates ammonia (free or transferred from glutamine from the small subunit), hydrogencarbonate and ATP and carries out an ATP-coupled ligase reaction, activating hydrogencarbonate by forming carboxy phosphate which reacts with ammonia to form carbamoyl phosphate. This is Carbamoyl phosphate synthase large chain from Streptococcus pyogenes serotype M6 (strain ATCC BAA-946 / MGAS10394).